The chain runs to 250 residues: Tetrathionate reductase subunit B (250 aa).

The tat-type signal signal peptide spans 1-33 (MWTGVNMDSSKRQFLQQLGVLTAGASLVPLAEA). 4Fe-4S ferredoxin-type domains follow at residues 50–79 (YAMLIDLRRCIGCQSCTVSCTIENQTPQGA), 97–128 (VTNVLLPRLCNHCDNPPCVPVCPVQATFQRED), and 129–158 (GIVVVDNKRCVGCAYCVQACPYDARFINHE). Positions 59, 62, 65, 69, 106, 109, 114, 118, 138, 141, 144, 148, 165, 168, 180, and 184 each coordinate [4Fe-4S] cluster.

In terms of assembly, probably composed of three subunits: TtrA, TtrB and TtrC. Post-translationally, predicted to be exported by the Tat system. The position of the signal peptide cleavage has not been experimentally proven.

It is found in the periplasm. It localises to the cell inner membrane. In terms of biological role, part of a membrane-bound tetrathionate reductase that catalyzes the reduction of tetrathionate to thiosulfate. TtrB is probably involved in transfer of electrons from TtrC to TtrA. During mice infection, the ability to use tetrathionate as an electron acceptor is a growth advantage for S.typhimurium over the competing microbiota in the lumen of the inflamed gut. The sequence is that of Tetrathionate reductase subunit B (ttrB) from Salmonella typhimurium (strain LT2 / SGSC1412 / ATCC 700720).